The primary structure comprises 245 residues: AP-1-like transcription factor YAP5 (245 aa).

Residues Leu-34–Arg-47 are compositionally biased toward basic residues. The interval Leu-34–Glu-77 is disordered. A bZIP domain is found at Asp-58 to Leu-121. A basic motif region spans residues Lys-63–Lys-82. The segment covering Asn-68–Glu-77 has biased composition (basic and acidic residues). A leucine-zipper region spans residues Leu-86–Lys-114.

This sequence belongs to the bZIP family. YAP subfamily. Homodimer.

It is found in the cytoplasm. The protein localises to the nucleus. Its function is as follows. Transcription activator involved in the regulation of genes expressed in response to environmental changes and metabolic requirements. According to genome-wide promoter binding and gene expression studies it is a coregulator for the expression of ribosomal genes, while its own expression is induced by the cell cycle specific activator SBF (SWI4-SWI6). The protein is AP-1-like transcription factor YAP5 (YAP5) of Saccharomyces cerevisiae (strain ATCC 204508 / S288c) (Baker's yeast).